The primary structure comprises 65 residues: Cold shock-like protein CspB (65 aa).

Residues 3 to 62 (GKVKWFNNEKGFGFIEMEGSEDVFVHFSAIQSDGYKALEEGQEVSFDITEGNRGPQAANV) form the CSD domain.

As to quaternary structure, homodimer.

It localises to the cytoplasm. The sequence is that of Cold shock-like protein CspB (cspB) from Bacillus cereus.